Here is a 459-residue protein sequence, read N- to C-terminus: 11S globulin seed storage protein 2 (459 aa).

Residues 1-21 (MVAFKFLLALSLSLLVSAAIA) form the signal peptide. Intrachain disulfides connect Cys34/Cys67 and Cys110/Cys284. Cupin type-1 domains are found at residues 37–237 (QRIS…ETIR) and 290–439 (TNVE…NQAQ). Residues 118–139 (RSQRTMERTEASEQQDRGSVRD) form a disordered region. The span at 121-139 (RTMERTEASEQQDRGSVRD) shows a compositional bias: basic and acidic residues.

Belongs to the 11S seed storage protein (globulins) family. Homohexamer. Each subunit is composed of an acidic and a basic chain derived from a single precursor and linked by a disulfide bond. As to expression, expressed in seeds (at protein level). Expressed in seeds.

In terms of biological role, seed storage protein. The protein is 11S globulin seed storage protein 2 of Sesamum indicum (Oriental sesame).